Here is a 238-residue protein sequence, read N- to C-terminus: Pyridoxine 5'-phosphate synthase (238 aa).

Residue N7 participates in 3-amino-2-oxopropyl phosphate binding. 9 to 10 (DH) contacts 1-deoxy-D-xylulose 5-phosphate. 3-amino-2-oxopropyl phosphate is bound at residue R18. Residue H43 is the Proton acceptor of the active site. 1-deoxy-D-xylulose 5-phosphate contacts are provided by R45 and H50. Catalysis depends on E70, which acts as the Proton acceptor. T100 is a binding site for 1-deoxy-D-xylulose 5-phosphate. H190 functions as the Proton donor in the catalytic mechanism. 3-amino-2-oxopropyl phosphate contacts are provided by residues G191 and 212 to 213 (GH).

It belongs to the PNP synthase family. Homooctamer; tetramer of dimers.

The protein localises to the cytoplasm. The catalysed reaction is 3-amino-2-oxopropyl phosphate + 1-deoxy-D-xylulose 5-phosphate = pyridoxine 5'-phosphate + phosphate + 2 H2O + H(+). Its pathway is cofactor biosynthesis; pyridoxine 5'-phosphate biosynthesis; pyridoxine 5'-phosphate from D-erythrose 4-phosphate: step 5/5. Functionally, catalyzes the complicated ring closure reaction between the two acyclic compounds 1-deoxy-D-xylulose-5-phosphate (DXP) and 3-amino-2-oxopropyl phosphate (1-amino-acetone-3-phosphate or AAP) to form pyridoxine 5'-phosphate (PNP) and inorganic phosphate. This Prochlorococcus marinus (strain MIT 9215) protein is Pyridoxine 5'-phosphate synthase.